Consider the following 179-residue polypeptide: Large ribosomal subunit protein uL10 (179 aa).

This sequence belongs to the universal ribosomal protein uL10 family. In terms of assembly, part of the ribosomal stalk of the 50S ribosomal subunit. The N-terminus interacts with L11 and the large rRNA to form the base of the stalk. The C-terminus forms an elongated spine to which L12 dimers bind in a sequential fashion forming a multimeric L10(L12)X complex.

Its function is as follows. Forms part of the ribosomal stalk, playing a central role in the interaction of the ribosome with GTP-bound translation factors. The sequence is that of Large ribosomal subunit protein uL10 from Thermomicrobium roseum (strain ATCC 27502 / DSM 5159 / P-2).